Reading from the N-terminus, the 143-residue chain is Large ribosomal subunit protein uL13 (143 aa).

The protein belongs to the universal ribosomal protein uL13 family. Part of the 50S ribosomal subunit.

This protein is one of the early assembly proteins of the 50S ribosomal subunit, although it is not seen to bind rRNA by itself. It is important during the early stages of 50S assembly. The protein is Large ribosomal subunit protein uL13 of Prochlorococcus marinus subsp. pastoris (strain CCMP1986 / NIES-2087 / MED4).